The primary structure comprises 122 residues: Ribosome-binding factor A (122 aa).

This sequence belongs to the RbfA family. As to quaternary structure, monomer. Binds 30S ribosomal subunits, but not 50S ribosomal subunits or 70S ribosomes.

It localises to the cytoplasm. Its function is as follows. One of several proteins that assist in the late maturation steps of the functional core of the 30S ribosomal subunit. Associates with free 30S ribosomal subunits (but not with 30S subunits that are part of 70S ribosomes or polysomes). Required for efficient processing of 16S rRNA. May interact with the 5'-terminal helix region of 16S rRNA. In Cupriavidus necator (strain ATCC 17699 / DSM 428 / KCTC 22496 / NCIMB 10442 / H16 / Stanier 337) (Ralstonia eutropha), this protein is Ribosome-binding factor A.